The following is a 161-amino-acid chain: 3-hydroxyacyl-[acyl-carrier-protein] dehydratase FabZ (161 aa).

H64 is a catalytic residue.

This sequence belongs to the thioester dehydratase family. FabZ subfamily.

It is found in the cytoplasm. It catalyses the reaction a (3R)-hydroxyacyl-[ACP] = a (2E)-enoyl-[ACP] + H2O. In terms of biological role, involved in unsaturated fatty acids biosynthesis. Catalyzes the dehydration of short chain beta-hydroxyacyl-ACPs and long chain saturated and unsaturated beta-hydroxyacyl-ACPs. This is 3-hydroxyacyl-[acyl-carrier-protein] dehydratase FabZ from Paramagnetospirillum magneticum (strain ATCC 700264 / AMB-1) (Magnetospirillum magneticum).